Consider the following 367-residue polypeptide: Peptide chain release factor 2 (367 aa).

N5-methylglutamine is present on glutamine 247.

Belongs to the prokaryotic/mitochondrial release factor family. In terms of processing, methylated by PrmC. Methylation increases the termination efficiency of RF2.

The protein resides in the cytoplasm. In terms of biological role, peptide chain release factor 2 directs the termination of translation in response to the peptide chain termination codons UGA and UAA. This Caulobacter sp. (strain K31) protein is Peptide chain release factor 2.